We begin with the raw amino-acid sequence, 256 residues long: Ubiquinone biosynthesis O-methyltransferase (256 aa).

The S-adenosyl-L-methionine site is built by R44, G80, D101, and M144.

Belongs to the methyltransferase superfamily. UbiG/COQ3 family.

It catalyses the reaction a 3-demethylubiquinol + S-adenosyl-L-methionine = a ubiquinol + S-adenosyl-L-homocysteine + H(+). The enzyme catalyses a 3-(all-trans-polyprenyl)benzene-1,2-diol + S-adenosyl-L-methionine = a 2-methoxy-6-(all-trans-polyprenyl)phenol + S-adenosyl-L-homocysteine + H(+). It participates in cofactor biosynthesis; ubiquinone biosynthesis. Functionally, O-methyltransferase that catalyzes the 2 O-methylation steps in the ubiquinone biosynthetic pathway. This chain is Ubiquinone biosynthesis O-methyltransferase, found in Methylocella silvestris (strain DSM 15510 / CIP 108128 / LMG 27833 / NCIMB 13906 / BL2).